The primary structure comprises 318 residues: D-alanine--D-alanine ligase (318 aa).

The ATP-grasp domain maps to 116–311 (KQVWQSLGIP…FQQLVLAILA (196 aa)). 142–197 (STELGFPLIVKPAHEGSSIGMAKVNSAQELVAAWQDAAKYDSQVLVEQWIHGPEFT) contacts ATP. Mg(2+) is bound by residues aspartate 265, glutamate 278, and asparagine 280.

This sequence belongs to the D-alanine--D-alanine ligase family. Mg(2+) serves as cofactor. The cofactor is Mn(2+).

Its subcellular location is the cytoplasm. It catalyses the reaction 2 D-alanine + ATP = D-alanyl-D-alanine + ADP + phosphate + H(+). Its pathway is cell wall biogenesis; peptidoglycan biosynthesis. Its function is as follows. Cell wall formation. The protein is D-alanine--D-alanine ligase of Pseudomonas putida (strain GB-1).